The sequence spans 155 residues: Large ribosomal subunit protein uL13 (155 aa).

This sequence belongs to the universal ribosomal protein uL13 family. In terms of assembly, part of the 50S ribosomal subunit.

Functionally, this protein is one of the early assembly proteins of the 50S ribosomal subunit, although it is not seen to bind rRNA by itself. It is important during the early stages of 50S assembly. The chain is Large ribosomal subunit protein uL13 from Rickettsia rickettsii (strain Iowa).